A 215-amino-acid chain; its full sequence is Probable transaldolase (215 aa).

K83 functions as the Schiff-base intermediate with substrate in the catalytic mechanism.

Belongs to the transaldolase family. Type 3B subfamily.

It is found in the cytoplasm. It catalyses the reaction D-sedoheptulose 7-phosphate + D-glyceraldehyde 3-phosphate = D-erythrose 4-phosphate + beta-D-fructose 6-phosphate. Its pathway is carbohydrate degradation; pentose phosphate pathway; D-glyceraldehyde 3-phosphate and beta-D-fructose 6-phosphate from D-ribose 5-phosphate and D-xylulose 5-phosphate (non-oxidative stage): step 2/3. Functionally, transaldolase is important for the balance of metabolites in the pentose-phosphate pathway. This Desulforapulum autotrophicum (strain ATCC 43914 / DSM 3382 / VKM B-1955 / HRM2) (Desulfobacterium autotrophicum) protein is Probable transaldolase.